Reading from the N-terminus, the 167-residue chain is uncharacterized protein (167 aa).

Its subcellular location is the mitochondrion. This is an uncharacterized protein from Ascobolus immersus.